A 414-amino-acid chain; its full sequence is Gamma-glutamyl phosphate reductase (414 aa).

This sequence belongs to the gamma-glutamyl phosphate reductase family.

It localises to the cytoplasm. The enzyme catalyses L-glutamate 5-semialdehyde + phosphate + NADP(+) = L-glutamyl 5-phosphate + NADPH + H(+). It participates in amino-acid biosynthesis; L-proline biosynthesis; L-glutamate 5-semialdehyde from L-glutamate: step 2/2. In terms of biological role, catalyzes the NADPH-dependent reduction of L-glutamate 5-phosphate into L-glutamate 5-semialdehyde and phosphate. The product spontaneously undergoes cyclization to form 1-pyrroline-5-carboxylate. The protein is Gamma-glutamyl phosphate reductase of Xanthomonas campestris pv. campestris (strain ATCC 33913 / DSM 3586 / NCPPB 528 / LMG 568 / P 25).